The chain runs to 82 residues: Small ribosomal subunit protein bS16 (82 aa).

This sequence belongs to the bacterial ribosomal protein bS16 family.

This Actinobacillus pleuropneumoniae serotype 5b (strain L20) protein is Small ribosomal subunit protein bS16.